The primary structure comprises 361 residues: Peptide chain release factor 1 (361 aa).

Gln-236 carries the post-translational modification N5-methylglutamine. Basic and acidic residues predominate over residues 285-309 (TAKDSARAADRKAQVGSGDRSERIR). The tract at residues 285 to 311 (TAKDSARAADRKAQVGSGDRSERIRTY) is disordered.

Belongs to the prokaryotic/mitochondrial release factor family. Post-translationally, methylated by PrmC. Methylation increases the termination efficiency of RF1.

It is found in the cytoplasm. Its function is as follows. Peptide chain release factor 1 directs the termination of translation in response to the peptide chain termination codons UAG and UAA. This Methylorubrum extorquens (strain CM4 / NCIMB 13688) (Methylobacterium extorquens) protein is Peptide chain release factor 1.